The chain runs to 131 residues: MGRVRTKTVKKAAKVIIEKYYTRLTLDFHTNKRICEEVAIIPTKPLRNKIAGYVTHLMGRLRHSQVRGISIKLQEEERERRDNYVPAVSALEQDIIEVDADTKEMLKLLDFHNIRGLQLTQPNTNNFGRRN.

The protein belongs to the eukaryotic ribosomal protein eS17 family.

In Drosophila melanogaster (Fruit fly), this protein is Small ribosomal subunit protein eS17 (RpS17).